Consider the following 229-residue polypeptide: Putative N-acetylmannosamine-6-phosphate 2-epimerase (229 aa).

This sequence belongs to the NanE family.

It carries out the reaction an N-acyl-D-glucosamine 6-phosphate = an N-acyl-D-mannosamine 6-phosphate. Its pathway is amino-sugar metabolism; N-acetylneuraminate degradation; D-fructose 6-phosphate from N-acetylneuraminate: step 3/5. In terms of biological role, converts N-acetylmannosamine-6-phosphate (ManNAc-6-P) to N-acetylglucosamine-6-phosphate (GlcNAc-6-P). This Escherichia coli O157:H7 protein is Putative N-acetylmannosamine-6-phosphate 2-epimerase.